The primary structure comprises 658 residues: tRNA uridine 5-carboxymethylaminomethyl modification enzyme MnmG (658 aa).

13-18 lines the FAD pocket; sequence GAGHAG. An NAD(+)-binding site is contributed by 285-299; the sequence is GPRYCPSVEDKINRF.

This sequence belongs to the MnmG family. Homodimer. Heterotetramer of two MnmE and two MnmG subunits. FAD serves as cofactor.

It localises to the cytoplasm. NAD-binding protein involved in the addition of a carboxymethylaminomethyl (cmnm) group at the wobble position (U34) of certain tRNAs, forming tRNA-cmnm(5)s(2)U34. This Verminephrobacter eiseniae (strain EF01-2) protein is tRNA uridine 5-carboxymethylaminomethyl modification enzyme MnmG.